A 476-amino-acid polypeptide reads, in one-letter code: Aspartyl/glutamyl-tRNA(Asn/Gln) amidotransferase subunit B (476 aa).

This sequence belongs to the GatB/GatE family. GatB subfamily. In terms of assembly, heterotrimer of A, B and C subunits.

The enzyme catalyses L-glutamyl-tRNA(Gln) + L-glutamine + ATP + H2O = L-glutaminyl-tRNA(Gln) + L-glutamate + ADP + phosphate + H(+). It carries out the reaction L-aspartyl-tRNA(Asn) + L-glutamine + ATP + H2O = L-asparaginyl-tRNA(Asn) + L-glutamate + ADP + phosphate + 2 H(+). Allows the formation of correctly charged Asn-tRNA(Asn) or Gln-tRNA(Gln) through the transamidation of misacylated Asp-tRNA(Asn) or Glu-tRNA(Gln) in organisms which lack either or both of asparaginyl-tRNA or glutaminyl-tRNA synthetases. The reaction takes place in the presence of glutamine and ATP through an activated phospho-Asp-tRNA(Asn) or phospho-Glu-tRNA(Gln). This chain is Aspartyl/glutamyl-tRNA(Asn/Gln) amidotransferase subunit B, found in Bacillus licheniformis (strain ATCC 14580 / DSM 13 / JCM 2505 / CCUG 7422 / NBRC 12200 / NCIMB 9375 / NCTC 10341 / NRRL NRS-1264 / Gibson 46).